We begin with the raw amino-acid sequence, 82 residues long: Small ribosomal subunit protein uS17 (82 aa).

The protein belongs to the universal ribosomal protein uS17 family. As to quaternary structure, part of the 30S ribosomal subunit.

One of the primary rRNA binding proteins, it binds specifically to the 5'-end of 16S ribosomal RNA. This is Small ribosomal subunit protein uS17 from Shewanella amazonensis (strain ATCC BAA-1098 / SB2B).